The primary structure comprises 238 residues: Orotidine 5'-phosphate decarboxylase (238 aa).

Substrate contacts are provided by residues Asp10, Lys32, 59 to 68 (DLKLHDIPNT), Thr122, Arg184, Gln193, Gly213, and Arg214. Lys61 serves as the catalytic Proton donor.

The protein belongs to the OMP decarboxylase family. Type 1 subfamily. Homodimer.

It carries out the reaction orotidine 5'-phosphate + H(+) = UMP + CO2. Its pathway is pyrimidine metabolism; UMP biosynthesis via de novo pathway; UMP from orotate: step 2/2. Functionally, catalyzes the decarboxylation of orotidine 5'-monophosphate (OMP) to uridine 5'-monophosphate (UMP). This is Orotidine 5'-phosphate decarboxylase from Bacillus mycoides (strain KBAB4) (Bacillus weihenstephanensis).